A 1755-amino-acid chain; its full sequence is Transposon Ty1-JR2 Gag-Pol polyprotein (1755 aa).

Over residues 1–16 the composition is skewed to low complexity; the sequence is MESQQLSQHSHISHGS. 3 disordered regions span residues 1–93, 126–173, and 352–421; these read MESQ…MMTQ, PQSQ…RPPP, and GSRN…SKST. Polar residues-rich tracts occupy residues 48–60, 71–93, and 127–152; these read TKAN…TPAS, SPQT…MMTQ, and QSQF…GNTF. The segment covering 153-165 has biased composition (low complexity); that stretch reads TDSSSADSDMTST. The segment at 299–401 is RNA-binding; the sequence is NNGIHINNKV…NSKSKTARAH (103 aa). Residues 402 to 418 show a composition bias toward low complexity; it reads NVSTSNNSPSTDNDSIS. At Ser416 the chain carries Phosphoserine. Residue Asp461 is the For protease activity; shared with dimeric partner of the active site. The tract at residues 583-640 is integrase-type zinc finger-like; sequence NVHTSESTRKYPYPFIHRMLAHANAQTIRYSLKNNTITYFNESDVDWSSAIDYQCPDC. An Integrase catalytic domain is found at 660-835; that stretch reads NSYEPFQYLH…AGLDISTLLP (176 aa). Residues Asp671 and Asp736 each contribute to the Mg(2+) site. Disordered regions lie at residues 956–1087, 1092–1111, and 1130–1186; these read SKAV…ETEK, RSPS…NIVP, and DLPL…EDNE. Over residues 960 to 969 the composition is skewed to low complexity; sequence SPTDSTPPST. The span at 1005–1015 shows a compositional bias: polar residues; it reads STPQISNIEST. Positions 1038-1053 are enriched in basic and acidic residues; that stretch reads ESSHASKSKDFRHSDS. Polar residues-rich tracts occupy residues 1054–1082 and 1101–1111; these read YSEN…QISD and PENNSSHNIVP. The Bipartite nuclear localization signal motif lies at 1178–1212; that stretch reads KKRSLEDNETEIKVSRDTWNTKNMRSLEPPRSKKR. Residues 1338-1476 enclose the Reverse transcriptase Ty1/copia-type domain; it reads NNYYITQLDI…DILGLEIKYQ (139 aa). Mg(2+) is bound by residues Asp1346, Asp1427, Asp1428, Asp1610, Glu1652, and Asp1685. One can recognise an RNase H Ty1/copia-type domain in the interval 1610-1752; sequence DASYGNQPYY…IKTFKLLTNK (143 aa).

The capsid protein forms a homotrimer, from which the VLPs are assembled. The protease is a homodimer, whose active site consists of two apposed aspartic acid residues. Post-translationally, initially, virus-like particles (VLPs) are composed of the structural unprocessed proteins Gag and Gag-Pol, and also contain the host initiator methionine tRNA (tRNA(i)-Met) which serves as a primer for minus-strand DNA synthesis, and a dimer of genomic Ty RNA. Processing of the polyproteins occurs within the particle and proceeds by an ordered pathway, called maturation. First, the protease (PR) is released by autocatalytic cleavage of the Gag-Pol polyprotein yielding capsid protein p45 and a Pol-p154 precursor protein. This cleavage is a prerequisite for subsequent processing of Pol-p154 at the remaining sites to release the mature structural and catalytic proteins. Maturation takes place prior to the RT reaction and is required to produce transposition-competent VLPs.

It localises to the cytoplasm. The protein localises to the nucleus. It carries out the reaction DNA(n) + a 2'-deoxyribonucleoside 5'-triphosphate = DNA(n+1) + diphosphate. The enzyme catalyses Endonucleolytic cleavage to 5'-phosphomonoester.. Its function is as follows. Capsid protein (CA) is the structural component of the virus-like particle (VLP), forming the shell that encapsulates the retrotransposons dimeric RNA genome. The particles are assembled from trimer-clustered units and there are holes in the capsid shells that allow for the diffusion of macromolecules. CA also has nucleocapsid-like chaperone activity, promoting primer tRNA(i)-Met annealing to the multipartite primer-binding site (PBS), dimerization of Ty1 RNA and initiation of reverse transcription. Functionally, the aspartyl protease (PR) mediates the proteolytic cleavages of the Gag and Gag-Pol polyproteins after assembly of the VLP. Reverse transcriptase/ribonuclease H (RT) is a multifunctional enzyme that catalyzes the conversion of the retro-elements RNA genome into dsDNA within the VLP. The enzyme displays a DNA polymerase activity that can copy either DNA or RNA templates, and a ribonuclease H (RNase H) activity that cleaves the RNA strand of RNA-DNA heteroduplexes during plus-strand synthesis and hydrolyzes RNA primers. The conversion leads to a linear dsDNA copy of the retrotransposon that includes long terminal repeats (LTRs) at both ends. In terms of biological role, integrase (IN) targets the VLP to the nucleus, where a subparticle preintegration complex (PIC) containing at least integrase and the newly synthesized dsDNA copy of the retrotransposon must transit the nuclear membrane. Once in the nucleus, integrase performs the integration of the dsDNA into the host genome. The polypeptide is Transposon Ty1-JR2 Gag-Pol polyprotein (TY1B-JR2) (Saccharomyces cerevisiae (strain ATCC 204508 / S288c) (Baker's yeast)).